The sequence spans 76 residues: Omega-conotoxin-like TxMKLT1-0211 (76 aa).

An N-terminal signal peptide occupies residues 1–22 (MKLTCMMIVAVLFLTAWTFVTA). A propeptide spanning residues 23-52 (VPHSSNALENLYLKAHHEMNNPEDSELNKR) is cleaved from the precursor. 3 disulfide bridges follow: Cys-53/Cys-67, Cys-60/Cys-71, and Cys-66/Cys-75.

This sequence belongs to the conotoxin O1 superfamily. As to expression, expressed by the venom duct.

It localises to the secreted. Its function is as follows. Omega-conotoxins act at presynaptic membranes, they bind and block voltage-gated calcium channels (Cav). The polypeptide is Omega-conotoxin-like TxMKLT1-0211 (Conus textile (Cloth-of-gold cone)).